Reading from the N-terminus, the 472-residue chain is Adenosylhomocysteinase (472 aa).

Residues threonine 63, aspartate 138, and glutamate 198 each coordinate substrate. 199-201 contacts NAD(+); sequence TTT. The substrate site is built by lysine 228 and aspartate 232. NAD(+) contacts are provided by residues asparagine 233, 262–267, glutamate 285, asparagine 320, 341–343, and asparagine 386; these read GYGDVG and IGH.

The protein belongs to the adenosylhomocysteinase family. NAD(+) is required as a cofactor.

It is found in the cytoplasm. The catalysed reaction is S-adenosyl-L-homocysteine + H2O = L-homocysteine + adenosine. It functions in the pathway amino-acid biosynthesis; L-homocysteine biosynthesis; L-homocysteine from S-adenosyl-L-homocysteine: step 1/1. Its function is as follows. May play a key role in the regulation of the intracellular concentration of adenosylhomocysteine. This is Adenosylhomocysteinase from Methylococcus capsulatus (strain ATCC 33009 / NCIMB 11132 / Bath).